We begin with the raw amino-acid sequence, 265 residues long: Putative hydro-lyase PA14_37210 (265 aa).

This sequence belongs to the D-glutamate cyclase family.

The sequence is that of Putative hydro-lyase PA14_37210 from Pseudomonas aeruginosa (strain UCBPP-PA14).